The sequence spans 596 residues: Sodium/mannose cotransporter SLC5A10 (596 aa).

Residues 1–15 are Extracellular-facing; it reads MAANSTSDLHTPGTQ. Asn4 carries N-linked (GlcNAc...) asparagine glycosylation. A helical membrane pass occupies residues 16-36; it reads LSVADIIVITVYFALNVAVGI. Over 37–72 the chain is Cytoplasmic; it reads WSSCRASRNTVNGYFLAGRDMTWWPIGASLFASSEG. The helical transmembrane segment at 73 to 93 threads the bilayer; the sequence is SGLFIGLAGSGAAGGLAVAGF. The Extracellular segment spans residues 94–99; it reads EWNATY. An N-linked (GlcNAc...) asparagine glycan is attached at Asn96. The helical transmembrane segment at 100-120 threads the bilayer; sequence VLLALAWVFVPIYISSEIVTL. At 121-149 the chain is on the cytoplasmic side; it reads PEYIQKRYGGQRIRMYLSVLSLLLSVFTK. 2 positions are modified to phosphoserine: Ser141 and Ser145. The residue at position 148 (Thr148) is a Phosphothreonine. The helical transmembrane segment at 150-170 threads the bilayer; it reads ISLDLYAGALFVHICLGWNFY. Over 171 to 173 the chain is Extracellular; sequence LST. A helical transmembrane segment spans residues 174-194; sequence ILTLGITALYTIAGGLAAVIY. Residues 195–200 lie on the Cytoplasmic side of the membrane; sequence TDALQT. A helical transmembrane segment spans residues 201–221; sequence LIMVVGAVILTIKAFDQIGGY. Residues 222–264 lie on the Extracellular side of the membrane; sequence GQLEAAYAQAIPSRTIANTTCHLPRTDAMHMFRDPHTGDLPWT. The helical transmembrane segment at 265–285 threads the bilayer; sequence GMTFGLTIMATWYWCTDQVIV. Residues 286 to 300 are Cytoplasmic-facing; sequence QRSLSARDLNHAKAG. The helical transmembrane segment at 301–321 threads the bilayer; sequence SILASYLKMLPMGLIIMPGMI. At 322–355 the chain is on the extracellular side; that stretch reads SRALFPDDVGCVVPSECLRACGAEVGCSNIAYPK. The helical transmembrane segment at 356-376 threads the bilayer; the sequence is LVMELMPIGLRGLMIAVMLAA. Residues 377–409 are Cytoplasmic-facing; it reads LMSSLTSIFNSSSTLFTMDIWRRLRPRSGEREL. Residues 410-430 form a helical membrane-spanning segment; the sequence is LLVGRLVIVALIGVSVAWIPV. Topologically, residues 431–443 are extracellular; sequence LQDSNSGQLFIYM. The chain crosses the membrane as a helical span at residues 444-464; the sequence is QSVTSSLAPPVTAVFVLGVFW. The Cytoplasmic portion of the chain corresponds to 465–471; it reads RRANEQG. The chain crosses the membrane as a helical span at residues 472 to 492; that stretch reads AFWGLIAGLVVGATRLVLEFL. At 493-513 the chain is on the extracellular side; the sequence is NPAPPCGEPDTRPAVLGSIHY. The chain crosses the membrane as a helical span at residues 514-534; that stretch reads LHFAVALFALSGAVVVAGSLL. Over 535–575 the chain is Cytoplasmic; sequence TPPPQSVQIENLTWWTLAQDVPLGTKAGDGQTPQKHAFWAR. The helical transmembrane segment at 576-596 threads the bilayer; the sequence is VCGFNAILLMCVNIFFYAYFA.

The protein belongs to the sodium:solute symporter (SSF) (TC 2.A.21) family. Predominantly expressed at high levels in kidney. Very low expression is detected in testes. In terms of tissue distribution, expressed in kidney. As to expression, the most abundant isoform expressed in kidney.

It is found in the apical cell membrane. It carries out the reaction D-mannose(out) + Na(+)(out) = D-mannose(in) + Na(+)(in). The enzyme catalyses D-fructopyranose(out) + Na(+)(out) = D-fructopyranose(in) + Na(+)(in). Its activity is regulated as follows. Inhibited by phlorizin. Functionally, electrogenic Na+-coupled sugar symporter that actively transports D-mannose or D-fructose at the plasma membrane, with a Na+ to sugar coupling ratio of 1:1. Transporter activity is driven by a transmembrane Na+ electrochemical gradient set by the Na+/K+ pump. Exclusively recognizes sugar substrates having a pyranose ring with an axial hydroxyl group on carbon 2. Has likely evolved to enable renal reabsorption of D-mannose, an important constituent of oligosaccharide chains of glycoproteins. Contributes to dietary D-fructose reabsorption from glomerular filtrate across the brush border of the kidney. Appears to have no transporter activity. This is Sodium/mannose cotransporter SLC5A10 (SLC5A10) from Homo sapiens (Human).